The primary structure comprises 40 residues: Photosystem II reaction center protein J (40 aa).

Residues 8–28 form a helical membrane-spanning segment; sequence IPLWIIGTVAGILVIGLVGVF.

It belongs to the PsbJ family. As to quaternary structure, PSII is composed of 1 copy each of membrane proteins PsbA, PsbB, PsbC, PsbD, PsbE, PsbF, PsbH, PsbI, PsbJ, PsbK, PsbL, PsbM, PsbT, PsbX, PsbY, PsbZ, Psb30/Ycf12, at least 3 peripheral proteins of the oxygen-evolving complex and a large number of cofactors. It forms dimeric complexes.

It localises to the plastid. The protein localises to the chloroplast thylakoid membrane. Functionally, one of the components of the core complex of photosystem II (PSII). PSII is a light-driven water:plastoquinone oxidoreductase that uses light energy to abstract electrons from H(2)O, generating O(2) and a proton gradient subsequently used for ATP formation. It consists of a core antenna complex that captures photons, and an electron transfer chain that converts photonic excitation into a charge separation. The polypeptide is Photosystem II reaction center protein J (Helianthus annuus (Common sunflower)).